Here is a 190-residue protein sequence, read N- to C-terminus: Protein GrpE (190 aa).

Residues 1 to 11 (MSNQDEPQNSP) are compositionally biased toward polar residues. The segment at 1–36 (MSNQDEPQNSPEEFAEDQQADVALEEASSDSSETAA) is disordered. Over residues 13–28 (EFAEDQQADVALEEAS) the composition is skewed to acidic residues.

Belongs to the GrpE family. As to quaternary structure, homodimer.

Its subcellular location is the cytoplasm. In terms of biological role, participates actively in the response to hyperosmotic and heat shock by preventing the aggregation of stress-denatured proteins, in association with DnaK and GrpE. It is the nucleotide exchange factor for DnaK and may function as a thermosensor. Unfolded proteins bind initially to DnaJ; upon interaction with the DnaJ-bound protein, DnaK hydrolyzes its bound ATP, resulting in the formation of a stable complex. GrpE releases ADP from DnaK; ATP binding to DnaK triggers the release of the substrate protein, thus completing the reaction cycle. Several rounds of ATP-dependent interactions between DnaJ, DnaK and GrpE are required for fully efficient folding. The protein is Protein GrpE of Teredinibacter turnerae (strain ATCC 39867 / T7901).